The sequence spans 487 residues: Protein nucleotidyltransferase YdiU (487 aa).

Positions 90, 92, 93, 113, 125, 126, 176, and 183 each coordinate ATP. The Proton acceptor role is filled by aspartate 252. Residues asparagine 253 and aspartate 262 each coordinate Mg(2+). Residue aspartate 262 participates in ATP binding.

The protein belongs to the SELO family. Requires Mg(2+) as cofactor. Mn(2+) serves as cofactor.

The enzyme catalyses L-seryl-[protein] + ATP = 3-O-(5'-adenylyl)-L-seryl-[protein] + diphosphate. The catalysed reaction is L-threonyl-[protein] + ATP = 3-O-(5'-adenylyl)-L-threonyl-[protein] + diphosphate. It catalyses the reaction L-tyrosyl-[protein] + ATP = O-(5'-adenylyl)-L-tyrosyl-[protein] + diphosphate. It carries out the reaction L-histidyl-[protein] + UTP = N(tele)-(5'-uridylyl)-L-histidyl-[protein] + diphosphate. The enzyme catalyses L-seryl-[protein] + UTP = O-(5'-uridylyl)-L-seryl-[protein] + diphosphate. The catalysed reaction is L-tyrosyl-[protein] + UTP = O-(5'-uridylyl)-L-tyrosyl-[protein] + diphosphate. Its function is as follows. Nucleotidyltransferase involved in the post-translational modification of proteins. It can catalyze the addition of adenosine monophosphate (AMP) or uridine monophosphate (UMP) to a protein, resulting in modifications known as AMPylation and UMPylation. The protein is Protein nucleotidyltransferase YdiU of Pseudomonas fluorescens (strain ATCC BAA-477 / NRRL B-23932 / Pf-5).